The chain runs to 246 residues: Transcriptional regulatory protein LytR (246 aa).

The Response regulatory domain maps to 2-116 (KALIIDDEPL…RIEQAVNKVR (115 aa)). The residue at position 53 (Asp53) is a 4-aspartylphosphate. The 105-residue stretch at 141–245 (LPVEIDDKIH…MKDFKASIGL (105 aa)) folds into the HTH LytTR-type domain.

In terms of assembly, homodimer; when phosphorylated. Post-translationally, phosphorylated and dephosphorylated by LytS.

It is found in the cytoplasm. Its function is as follows. Member of the two-component regulatory system LytR/LytS that regulates genes involved in autolysis, programmed cell death, biofilm formation and cell wall metabolism. Also participates in sensing and responding to host defense cationic antimicrobial peptides (HDPs). Upon phosphorylation by LytS, functions as a transcription regulator by direct binding to promoter regions of target genes including lrgA and lrgB, to positively regulate their expression. The chain is Transcriptional regulatory protein LytR (lytR) from Staphylococcus aureus (strain MW2).